The sequence spans 52 residues: Insulin (52 aa).

Intrachain disulfides connect Cys-9-Cys-38, Cys-21-Cys-51, and Cys-37-Cys-42.

The protein belongs to the insulin family. As to quaternary structure, heterodimer of a B chain and an A chain linked by two disulfide bonds.

The protein localises to the secreted. In terms of biological role, insulin decreases blood glucose concentration. It increases cell permeability to monosaccharides, amino acids and fatty acids. It accelerates glycolysis, the pentose phosphate cycle, and glycogen synthesis in liver. This Piaractus mesopotamicus (Small-scaled pacu) protein is Insulin (ins).